Here is a 140-residue protein sequence, read N- to C-terminus: uncharacterized protein (140 aa).

Residues Leu-27–Arg-65 are a coiled coil.

This is an uncharacterized protein from Pasteurella multocida (strain Pm70).